We begin with the raw amino-acid sequence, 224 residues long: Non-structural protein V (224 aa).

The segment covering 54–65 (QKNIQHPTASHQ) has biased composition (polar residues). Disordered regions lie at residues 54 to 94 (QKNI…TQIP) and 150 to 172 (TEFK…GHRR). Residues H170, C189, C193, C205, C207, C210, C214, and C217 each contribute to the Zn(2+) site.

The protein belongs to the paramyxoviruses V protein family. As to quaternary structure, interacts with host IFIH1/MDA5 and DHX58/LGP2. Forms with host DDB1, CUL4A, STAT1, STAT2 and STAT3 the mumps virus V-dependent complex (VDC).

It localises to the virion. It is found in the host cytoplasm. In terms of biological role, plays an essential role in the inhibition of host immune response. Prevents the establishment of cellular antiviral state by blocking interferon-alpha/beta (IFN-alpha/beta) production and signaling pathway. Interacts with host IFIH1/MDA5 and DHX58/LGP2 to inhibit the transduction pathway involved in the activation of IFN-beta promoter, thus protecting the virus against cell antiviral state. Blocks the type I and II interferon signaling pathways by interacting with host STAT1, STAT2 and STAT3, and mediating their ubiquitination and subsequent proteasomal degradation. The protein is Non-structural protein V of Homo sapiens (Human).